A 1083-amino-acid chain; its full sequence is MPKRTDIRKVLVIGSGPIVIGQAVEFDYSGTQAIKALRDEGVEVVLLNSNPATVMTDPEFAHRTYIEPITVEAAERILASERPDSLLPTMGGQTALNLAKALAEQGILEKYGVRLIGASLDAINKAEDRQLFKAAMQKIGVALPKSGYATTLDQAMSLVEDIGFPAIIRPSFTLGGTGGGIAYNREEFETICRSGLKASPTTTILVEESVLGWKEYELEVVRDTADNVIIVCSIENLDPMGVHTGDSITVAPAQTLTDREYQRMRQASLAIIREIGVETGGSNIQFGINPKDGRMVVIEMNPRVSRSSALASKATGYPIAKIAAKLALGYTLDELRNDITRDTPASFEPTLDYVVVKVPRFNFEKFPHADRTLTTSMRSVGEVMAIGRTFPEAYMKALRSMELGRVGLESPELPAEKEEREKVLREALRIPRPERPWFVAQAFREGMTVEDVHALSAIDPWFLRYIQMLVNEAQSLQEYGRLDQLPDEVLRQAKAHGFSDKYLGRLLGYPAEEVRAHRHARNIRPVYKRVDTCAAEFEAYTPYLYSTYEEEDEAPPTDRQKVLILGSGPIRIGQGIEFDYACVHAAFALREAGYETVMVNCNPETVSTDYDTSDRLYFEPLTIEDVLEVSQREKPVGAIVQFGGQTPLRISVPLEKAGLPILGTSPDAIDRAEDRERFAALIEKLGLKQPENGVARSHAEAFKVAERIGYPVMVRPSYVLGGRAMETVYDVASLERYMREAVSASPEHPVLIDRFLKEAIEVDLDLVADRTGAVMIGGVLEHIQEAGVHSGDAAATLPPHSLSPDLVERMKDQAIALARELGVVGLMNVQFAIQGKTIYILEVNPRASRTVPFISKATGVAMAKIAALCMVGKTLKELGVTQEPEFKHVAVKESVFPFARFAGVDVILGPEMKSTGEVMGLANDYASAFAKSQLAAGVKLPKSGKVFISVKDDDKPAVVDLARRLRSMGFSLVVTSGTHTYLATKGIEAQVVQKVTEGRPNIVDKIVDGEIVLVINTTFGKQEIADSFSIRRESLMHSVPYYTTVQAARMAVGALESLKCTELEVKPLQEYLGINAAPPGTRR.

Positions 1–402 are carboxyphosphate synthetic domain; the sequence is MPKRTDIRKV…AYMKALRSME (402 aa). Positions 129, 169, 175, 176, 208, 210, 215, 241, 242, 243, 285, and 299 each coordinate ATP. An ATP-grasp 1 domain is found at 133–328; that stretch reads KAAMQKIGVA…IAKIAAKLAL (196 aa). Gln285, Glu299, and Asn301 together coordinate Mg(2+). Mn(2+) contacts are provided by Gln285, Glu299, and Asn301. Residues 403–554 are oligomerization domain; sequence LGRVGLESPE…YSTYEEEDEA (152 aa). Positions 555–937 are carbamoyl phosphate synthetic domain; it reads PPTDRQKVLI…AFAKSQLAAG (383 aa). One can recognise an ATP-grasp 2 domain in the interval 679-871; sequence AALIEKLGLK…MAKIAALCMV (193 aa). Residues Arg715, Arg754, Leu756, Glu761, Gly787, Val788, His789, Ser790, Gln830, and Glu842 each coordinate ATP. Residues Gln830, Glu842, and Asn844 each contribute to the Mg(2+) site. 3 residues coordinate Mn(2+): Gln830, Glu842, and Asn844. Residues 938–1078 form the MGS-like domain; that stretch reads VKLPKSGKVF…QEYLGINAAP (141 aa). The segment at 938 to 1083 is allosteric domain; sequence VKLPKSGKVF…INAAPPGTRR (146 aa).

Belongs to the CarB family. In terms of assembly, composed of two chains; the small (or glutamine) chain promotes the hydrolysis of glutamine to ammonia, which is used by the large (or ammonia) chain to synthesize carbamoyl phosphate. Tetramer of heterodimers (alpha,beta)4. It depends on Mg(2+) as a cofactor. Mn(2+) is required as a cofactor.

It carries out the reaction hydrogencarbonate + L-glutamine + 2 ATP + H2O = carbamoyl phosphate + L-glutamate + 2 ADP + phosphate + 2 H(+). It catalyses the reaction hydrogencarbonate + NH4(+) + 2 ATP = carbamoyl phosphate + 2 ADP + phosphate + 2 H(+). The protein operates within amino-acid biosynthesis; L-arginine biosynthesis; carbamoyl phosphate from bicarbonate: step 1/1. It functions in the pathway pyrimidine metabolism; UMP biosynthesis via de novo pathway; (S)-dihydroorotate from bicarbonate: step 1/3. Large subunit of the glutamine-dependent carbamoyl phosphate synthetase (CPSase). CPSase catalyzes the formation of carbamoyl phosphate from the ammonia moiety of glutamine, carbonate, and phosphate donated by ATP, constituting the first step of 2 biosynthetic pathways, one leading to arginine and/or urea and the other to pyrimidine nucleotides. The large subunit (synthetase) binds the substrates ammonia (free or transferred from glutamine from the small subunit), hydrogencarbonate and ATP and carries out an ATP-coupled ligase reaction, activating hydrogencarbonate by forming carboxy phosphate which reacts with ammonia to form carbamoyl phosphate. This Myxococcus xanthus (strain DK1622) protein is Carbamoyl phosphate synthase large chain.